A 624-amino-acid polypeptide reads, in one-letter code: Polygalacturonase 1 beta-like protein 2 (624 aa).

An N-terminal signal peptide occupies residues 1 to 26 (MNNIEATLFLCFFCIFSSSNVHFAGA). Residues 121–124 (FAAY) form an FXXY 1 repeat. An N-linked (GlcNAc...) asparagine glycan is attached at Asn-128. FXXY repeat units lie at residues 129 to 132 (FTNY), 143 to 146 (FKNY), 157 to 160 (FRRY), 171 to 174 (FTNY), 185 to 188 (FTTY), 199 to 202 (FTNY), 213 to 216 (FTSY), 227 to 230 (FTTY), 241 to 244 (FTSY), 255 to 258 (FSGY), and 269 to 272 (FTKY). Asn-145 is a glycosylation site (N-linked (GlcNAc...) asparagine). The interval 199–219 (FTNYNTDANEPNGRFTSYSDK) is disordered. Residue Asn-280 is glycosylated (N-linked (GlcNAc...) asparagine). FXXY repeat units follow at residues 283–286 (FTSY), 297–300 (FKGY), 311–314 (FKNY), 325–328 (FSSY), and 339–342 (FVNY). N-linked (GlcNAc...) asparagine glycosylation occurs at Asn-352. An FXXY 18 repeat occupies 353–356 (FTGY). An N-linked (GlcNAc...) asparagine glycan is attached at Asn-364. 3 FXXY repeats span residues 367–370 (FKTY), 376–379 (FKVY), and 386–389 (FARY). Asn-392 and Asn-463 each carry an N-linked (GlcNAc...) asparagine glycan. The BURP domain maps to 409–623 (FFREAMLKEG…FENDMTWNII (215 aa)).

Expressed in flowers and stems.

The protein resides in the secreted. The protein localises to the extracellular space. It localises to the apoplast. Its subcellular location is the cell wall. In terms of biological role, involved in cell size determination. In Arabidopsis thaliana (Mouse-ear cress), this protein is Polygalacturonase 1 beta-like protein 2.